Here is a 498-residue protein sequence, read N- to C-terminus: Lysine--tRNA ligase (498 aa).

Positions 409 and 416 each coordinate Mg(2+).

The protein belongs to the class-II aminoacyl-tRNA synthetase family. Homodimer. The cofactor is Mg(2+).

It is found in the cytoplasm. It catalyses the reaction tRNA(Lys) + L-lysine + ATP = L-lysyl-tRNA(Lys) + AMP + diphosphate. The chain is Lysine--tRNA ligase from Teredinibacter turnerae (strain ATCC 39867 / T7901).